A 446-amino-acid chain; its full sequence is Asparagine--tRNA ligase (446 aa).

This sequence belongs to the class-II aminoacyl-tRNA synthetase family. As to quaternary structure, homodimer.

It is found in the cytoplasm. The enzyme catalyses tRNA(Asn) + L-asparagine + ATP = L-asparaginyl-tRNA(Asn) + AMP + diphosphate + H(+). In Sorangium cellulosum (strain So ce56) (Polyangium cellulosum (strain So ce56)), this protein is Asparagine--tRNA ligase.